A 426-amino-acid polypeptide reads, in one-letter code: tRNA(Ile)-lysidine synthase (426 aa).

Residue 21–26 coordinates ATP; that stretch reads SGGLDS.

This sequence belongs to the tRNA(Ile)-lysidine synthase family.

It localises to the cytoplasm. The catalysed reaction is cytidine(34) in tRNA(Ile2) + L-lysine + ATP = lysidine(34) in tRNA(Ile2) + AMP + diphosphate + H(+). Functionally, ligates lysine onto the cytidine present at position 34 of the AUA codon-specific tRNA(Ile) that contains the anticodon CAU, in an ATP-dependent manner. Cytidine is converted to lysidine, thus changing the amino acid specificity of the tRNA from methionine to isoleucine. This Enterobacter sp. (strain 638) protein is tRNA(Ile)-lysidine synthase.